The primary structure comprises 135 residues: Salivary protein 15 Iper-1 (135 aa).

The signal sequence occupies residues 1 to 22 (MESFVAMKVVCILFLFVVAAEA). N93 and N104 each carry an N-linked (GlcNAc...) asparagine glycan. The interval 116–135 (GPNKQTCADKSKCVGHIPGC) is CD4-binding.

This sequence belongs to the salp15 family. Interacts with host CD4. Interacts with host DC-SIGN (CD209). As to quaternary structure, (Microbial infection) Interacts with Borrelia outer surface protein C (OspC). In terms of tissue distribution, expressed in salivary glands from feeding female ticks. Highly expressed 4 days after start of feeding.

It is found in the secreted. Salivary tick protein that downregulates host immune system by binding to both dendritic cells, and CD4(+) T cells. Specifically binds to the CD4 coreceptor on T cells. This interaction prevents the activation of the Src kinase, Lck, and its downstream substrate Zap-70, and results in deficient activation of PLCgamma1, the repression of calcium fluxes triggered by T-cell antigen receptor (TCR) ligation, and a subsequent reduction in interleukin-2 production. This salivary protein also binds to DC-SIGN (CD209) on dendritic cells (DC) and activates the Raf-1 kinase/MEK signaling pathway that results in down-regulating expression of pro-inflammatory cytokines. Furthermore, it inhibits T cell proliferation induced by DCs. It also inhibits in vitro keratinocyte inflammation induced by Borrelia burgdorferi or by the major outer surface protein (OspC) of Borrelia. In addition, it downregulates chemokines and monocyte chemoattractant protein 1, as well as several antimicrobial peptides such as defensins, cathelicidin, psoriasin, and RNase 7. Apart from its immunomodulatory activities, it is also associated with protection of Borrelia spirochetes from antibody-mediated killing through its binding to OspC. In vivo, tests on different immune disease animal models show promising therapeutic results, e.g., in inhibiting HIV infection, experimental autoimmune encephalomyelitis, transplantation rejection, and asthma. Its function is as follows. (Microbial infection) Protects Borrelia garinii from anti-Borrelia antibody-mediated cytotoxicity in vitro. May facilitate B.garinii transmission in mouse model. In terms of biological role, (Microbial infection) Protects Borrelia burgdorferi from anti-Borrelia antibody-mediated cytotoxicity in vitro. Functionally, (Microbial infection) Protects Borrelia afzelii from anti-Borrelia antibody-mediated cytotoxicity in vitro. The polypeptide is Salivary protein 15 Iper-1 (Ixodes persulcatus (Taiga tick)).